The following is a 293-amino-acid chain: Pyridoxal 5'-phosphate synthase subunit PdxS (293 aa).

Residue Asp-23 participates in D-ribose 5-phosphate binding. Lys-80 functions as the Schiff-base intermediate with D-ribose 5-phosphate in the catalytic mechanism. Gly-152 serves as a coordination point for D-ribose 5-phosphate. Position 164 (Arg-164) interacts with D-glyceraldehyde 3-phosphate. D-ribose 5-phosphate-binding positions include Gly-213 and 234-235 (GS).

It belongs to the PdxS/SNZ family. As to quaternary structure, in the presence of PdxT, forms a dodecamer of heterodimers.

It catalyses the reaction aldehydo-D-ribose 5-phosphate + D-glyceraldehyde 3-phosphate + L-glutamine = pyridoxal 5'-phosphate + L-glutamate + phosphate + 3 H2O + H(+). Its pathway is cofactor biosynthesis; pyridoxal 5'-phosphate biosynthesis. Functionally, catalyzes the formation of pyridoxal 5'-phosphate from ribose 5-phosphate (RBP), glyceraldehyde 3-phosphate (G3P) and ammonia. The ammonia is provided by the PdxT subunit. Can also use ribulose 5-phosphate and dihydroxyacetone phosphate as substrates, resulting from enzyme-catalyzed isomerization of RBP and G3P, respectively. In Chloroflexus aurantiacus (strain ATCC 29366 / DSM 635 / J-10-fl), this protein is Pyridoxal 5'-phosphate synthase subunit PdxS.